We begin with the raw amino-acid sequence, 89 residues long: UPF0223 protein BCA_4066 (89 aa).

This sequence belongs to the UPF0223 family.

The polypeptide is UPF0223 protein BCA_4066 (Bacillus cereus (strain 03BB102)).